A 137-amino-acid polypeptide reads, in one-letter code: Fluoride-specific ion channel FluC 1 (137 aa).

Transmembrane regions (helical) follow at residues 4-24 (LIYI…YYLG), 37-57 (LATL…TTYI), 67-87 (VITG…TLSV), and 98-118 (WGIA…MSGL). Glycine 77 and threonine 80 together coordinate Na(+).

The protein belongs to the fluoride channel Fluc/FEX (TC 1.A.43) family.

The protein resides in the cell membrane. The catalysed reaction is fluoride(in) = fluoride(out). Na(+) is not transported, but it plays an essential structural role and its presence is essential for fluoride channel function. Fluoride-specific ion channel. Important for reducing fluoride concentration in the cell, thus reducing its toxicity. The chain is Fluoride-specific ion channel FluC 1 from Bacillus anthracis.